A 350-amino-acid polypeptide reads, in one-letter code: Induced myeloid leukemia cell differentiation protein Mcl-1 homolog (350 aa).

Glycyl lysine isopeptide (Lys-Gly) (interchain with G-Cter in ubiquitin) cross-links involve residues Lys-5 and Lys-40. Positions 104–175 (CASPPEEMEG…PAEEEEDELF (72 aa)) are PEST-like. Ser-121 carries the phosphoserine modification. Lys-136 participates in a covalent cross-link: Glycyl lysine isopeptide (Lys-Gly) (interchain with G-Cter in ubiquitin). The disordered stretch occupies residues 148–170 (GEASSGPGTDGSLPSTPPPAEEE). Ser-159 carries the post-translational modification Phosphoserine; by GSK3-alpha and GSK3-beta. Position 162 is a phosphoserine (Ser-162). A Phosphothreonine; by MAPK modification is found at Thr-163. Residues Lys-194 and Lys-197 each participate in a glycyl lysine isopeptide (Lys-Gly) (interchain with G-Cter in ubiquitin) cross-link. Positions 209–223 (ALETLRRVGDGVQRN) match the BH3 motif. The short motif at 252-272 (HVFSDGVTNWGRIVTLISFGA) is the BH1 element. The BH2 motif lies at 304-319 (DWLVKQRGWDGFVEFF). The helical transmembrane segment at 328–348 (IRNVLLAFAGVAGVGAGLAYL) threads the bilayer.

Belongs to the Bcl-2 family. Interacts with HIF3A (via C-terminus domain). Interacts with BOK, BIK, BAX, BAK1, and TPT1. Interacts with unphosphorylated BAD. Interacts with BMF, BBC3 and PMAIP1. Interacts with BOP. Interacts with BCL2L11; may sequester BCL2L11 to prevent its pro-apoptotic activity. Interacts with GIMAP5 and HSPA8/HSC70; the interaction between HSPA8 and MCL1 is impaired in the absence of GIMAP5. In terms of processing, cleaved by CASP3 during apoptosis, yielding a pro-apoptotic C-terminal fragment. Post-translationally, rapidly degraded in the absence of phosphorylation in the PEST region. Phosphorylated on Ser-159, by GSK3, in response to IL3/interleukin-3 withdrawal. Phosphorylation at Ser-159 induces ubiquitination and proteasomal degradation, abrogating the anti-apoptotic activity. Treatment with taxol or okadaic acid induces phosphorylation on additional sites. In terms of processing, ubiquitinated. Ubiquitination is induced by phosphorylation at Ser-159. Deubiquitinated by USP20; leading to increased stability.

It is found in the membrane. The protein localises to the cytoplasm. Its subcellular location is the mitochondrion. The protein resides in the nucleus. It localises to the nucleoplasm. Its function is as follows. Involved in the regulation of apoptosis versus cell survival, and in the maintenance of viability but not of proliferation. Mediates its effects by interactions with a number of other regulators of apoptosis. In Felis catus (Cat), this protein is Induced myeloid leukemia cell differentiation protein Mcl-1 homolog (MCL1).